We begin with the raw amino-acid sequence, 560 residues long: Membrane protein insertase YidC (560 aa).

The helical transmembrane segment at 1 to 21 (MDIKRTILIAALAVVSYVMVL) threads the bilayer. The interval 42–66 (VAPGLPDGVPAGNNGASADVPSANA) is disordered. A run of 5 helical transmembrane segments spans residues 341-361 (LELTVDYGFLWFIAQPIFWLL), 367-387 (LLGNWGWSIIVLTMLIKGLFF), 437-457 (LGGCLPILVQMPVFLALYWVL), 468-488 (WILWITDLSIKDPFFILPIIM), and 515-535 (PIIFTFFFLWFPAGLVLYWVV).

This sequence belongs to the OXA1/ALB3/YidC family. Type 1 subfamily. As to quaternary structure, interacts with the Sec translocase complex via SecD. Specifically interacts with transmembrane segments of nascent integral membrane proteins during membrane integration.

Its subcellular location is the cell inner membrane. Required for the insertion and/or proper folding and/or complex formation of integral membrane proteins into the membrane. Involved in integration of membrane proteins that insert both dependently and independently of the Sec translocase complex, as well as at least some lipoproteins. Aids folding of multispanning membrane proteins. In Pseudomonas putida (strain ATCC 47054 / DSM 6125 / CFBP 8728 / NCIMB 11950 / KT2440), this protein is Membrane protein insertase YidC.